We begin with the raw amino-acid sequence, 264 residues long: Ribosomal protein L11 methyltransferase (264 aa).

The S-adenosyl-L-methionine site is built by Thr116, Gly137, Asp159, and Asn200.

Belongs to the methyltransferase superfamily. PrmA family.

It localises to the cytoplasm. It carries out the reaction L-lysyl-[protein] + 3 S-adenosyl-L-methionine = N(6),N(6),N(6)-trimethyl-L-lysyl-[protein] + 3 S-adenosyl-L-homocysteine + 3 H(+). Methylates ribosomal protein L11. The sequence is that of Ribosomal protein L11 methyltransferase from Thermotoga neapolitana (strain ATCC 49049 / DSM 4359 / NBRC 107923 / NS-E).